The sequence spans 309 residues: Glutaminase (309 aa).

Positions 64, 114, 160, 167, 191, 243, and 261 each coordinate substrate.

This sequence belongs to the glutaminase family. Homotetramer.

The enzyme catalyses L-glutamine + H2O = L-glutamate + NH4(+). The polypeptide is Glutaminase (Rhizobium johnstonii (strain DSM 114642 / LMG 32736 / 3841) (Rhizobium leguminosarum bv. viciae)).